A 78-amino-acid chain; its full sequence is UPF0349 protein BPUM_2879 (78 aa).

Belongs to the UPF0349 family.

This chain is UPF0349 protein BPUM_2879, found in Bacillus pumilus (strain SAFR-032).